A 160-amino-acid chain; its full sequence is MAPK regulated corepressor interacting protein 2 (160 aa).

The residue at position 1 (methionine 1) is an N-acetylmethionine. The disordered stretch occupies residues 1 to 22 (MYTITKGPSKLVAQRRTGPTQQ). Arginine 35 carries the omega-N-methylarginine modification. A disordered region spans residues 43-64 (LPAHLQPSAQTQGPWPLASSGP). The residue at position 61 (serine 61) is a Phosphoserine. Arginine 65 carries the post-translational modification Omega-N-methylarginine. Position 82 is a phosphoserine (serine 82).

The protein belongs to the MCRIP family. As to quaternary structure, interacts with DDX6. Interacts with MCRIP1.

It is found in the cytoplasm. The protein localises to the stress granule. The protein resides in the nucleus. The polypeptide is MAPK regulated corepressor interacting protein 2 (Mcrip2) (Mus musculus (Mouse)).